The primary structure comprises 698 residues: eEF1A lysine and N-terminal methyltransferase (698 aa).

M1 carries the post-translational modification N-acetylmethionine. A Phosphoserine modification is found at S267. The segment at 431–461 is disordered; the sequence is KDTSHRAQKKRKKDRKKQRPADTSEDFPPAP. A compositionally biased stretch (basic residues) spans 436–448; that stretch reads RAQKKRKKDRKKQ.

This sequence belongs to the methyltransferase superfamily. As to quaternary structure, forms a tripartite complex containing GAB1, METTL13 and SPRY2. Within the complex interacts with GAB1 and SPRY2. In terms of tissue distribution, expressed in the inner ear (at protein level). Expression is detected in the cochlear duct, spiral limbus region, efferent and afferent nerves, and in spiral ganglion neurons (at protein level).

The protein resides in the cytoplasm. It is found in the nucleus. The protein localises to the mitochondrion. The enzyme catalyses L-lysyl-[protein] + S-adenosyl-L-methionine = N(6)-methyl-L-lysyl-[protein] + S-adenosyl-L-homocysteine + H(+). It catalyses the reaction N(6)-methyl-L-lysyl-[protein] + S-adenosyl-L-methionine = N(6),N(6)-dimethyl-L-lysyl-[protein] + S-adenosyl-L-homocysteine + H(+). It carries out the reaction N-terminal glycyl-L-lysyl-L-glutamyl-[protein] + 3 S-adenosyl-L-methionine = N-terminal N,N,N-trimethyl-glycyl-L-lysyl-L-glutamyl-[protein] + 3 S-adenosyl-L-homocysteine + 3 H(+). In terms of biological role, dual methyltransferase that catalyzes methylation of elongation factor 1-alpha (EEF1A1 and EEF1A2) at two different positions, and is therefore involved in the regulation of mRNA translation. Via its C-terminus, methylates EEF1A1 and EEF1A2 at the N-terminal residue 'Gly-2'. Via its N-terminus dimethylates EEF1A1 and EEF1A2 at residue 'Lys-55'. Has no activity towards core histones H2A, H2B, H3 and H4. The polypeptide is eEF1A lysine and N-terminal methyltransferase (Mus musculus (Mouse)).